Here is a 480-residue protein sequence, read N- to C-terminus: ATP synthase subunit beta (480 aa).

152–159 contacts ATP; that stretch reads GGAGVGKT.

Belongs to the ATPase alpha/beta chains family. F-type ATPases have 2 components, CF(1) - the catalytic core - and CF(0) - the membrane proton channel. CF(1) has five subunits: alpha(3), beta(3), gamma(1), delta(1), epsilon(1). CF(0) has three main subunits: a(1), b(2) and c(9-12). The alpha and beta chains form an alternating ring which encloses part of the gamma chain. CF(1) is attached to CF(0) by a central stalk formed by the gamma and epsilon chains, while a peripheral stalk is formed by the delta and b chains.

The protein resides in the cell membrane. It catalyses the reaction ATP + H2O + 4 H(+)(in) = ADP + phosphate + 5 H(+)(out). Its function is as follows. Produces ATP from ADP in the presence of a proton gradient across the membrane. The catalytic sites are hosted primarily by the beta subunits. The sequence is that of ATP synthase subunit beta from Wolbachia sp. subsp. Brugia malayi (strain TRS).